The sequence spans 200 residues: ATP-dependent Clp protease proteolytic subunit (200 aa).

Serine 102 acts as the Nucleophile in catalysis. Histidine 127 is an active-site residue.

It belongs to the peptidase S14 family. Fourteen ClpP subunits assemble into 2 heptameric rings which stack back to back to give a disk-like structure with a central cavity, resembling the structure of eukaryotic proteasomes.

It localises to the cytoplasm. The catalysed reaction is Hydrolysis of proteins to small peptides in the presence of ATP and magnesium. alpha-casein is the usual test substrate. In the absence of ATP, only oligopeptides shorter than five residues are hydrolyzed (such as succinyl-Leu-Tyr-|-NHMec, and Leu-Tyr-Leu-|-Tyr-Trp, in which cleavage of the -Tyr-|-Leu- and -Tyr-|-Trp bonds also occurs).. Cleaves peptides in various proteins in a process that requires ATP hydrolysis. Has a chymotrypsin-like activity. Plays a major role in the degradation of misfolded proteins. This Dehalococcoides mccartyi (strain ATCC BAA-2100 / JCM 16839 / KCTC 5957 / BAV1) protein is ATP-dependent Clp protease proteolytic subunit.